Here is a 366-residue protein sequence, read N- to C-terminus: MAKRIIGTTPKEDGFRMPGEFEAQDQIFMIWPERPDNWRDGAKPVQIAFTNVAKAISRFTPVTMLVSQSQYQNARYQLPADVRVLEVSNNDSWVRDCGPSFVINDKGELRANDWTFNAWGGLVDGLYFPWDQDDLVAQKVCELERVDSYRTDDFVLEGGSFHVDGQGTVLTTEMCLLSEGRNPHMSKEDIENKLKEHLNAEKILWLGDGIDPEETNGHVDDVACFVAPGEVACIYTEDEKSPFYEAAQDAYKRLNQMTDAKGRQLKVHKLTCPAKNVTIKKQFRIDTVEGTMPREDGDICIASYMNFLITNKGVIVPQYGDENDALALKQVQEMFPDREIVGVNTVEVVYGGGNIHCITQQQPKAK.

The Amidino-cysteine intermediate role is filled by cysteine 357.

This sequence belongs to the agmatine deiminase family.

It catalyses the reaction agmatine + H2O = N-carbamoylputrescine + NH4(+). This Lactococcus lactis subsp. lactis (strain IL1403) (Streptococcus lactis) protein is Putative agmatine deiminase.